A 1096-amino-acid polypeptide reads, in one-letter code: DNA-directed RNA polymerase subunit beta (1096 aa).

The tract at residues 1069–1096 is disordered; that stretch reads DLMQDVNPRRSTPSRPTYESLGSDYQED.

It belongs to the RNA polymerase beta chain family. In cyanobacteria the RNAP catalytic core is composed of 2 alpha, 1 beta, 1 beta', 1 gamma and 1 omega subunit. When a sigma factor is associated with the core the holoenzyme is formed, which can initiate transcription.

It catalyses the reaction RNA(n) + a ribonucleoside 5'-triphosphate = RNA(n+1) + diphosphate. Its function is as follows. DNA-dependent RNA polymerase catalyzes the transcription of DNA into RNA using the four ribonucleoside triphosphates as substrates. The sequence is that of DNA-directed RNA polymerase subunit beta from Prochlorococcus marinus (strain SARG / CCMP1375 / SS120).